We begin with the raw amino-acid sequence, 103 residues long: Large ribosomal subunit protein bL21 (103 aa).

This sequence belongs to the bacterial ribosomal protein bL21 family. In terms of assembly, part of the 50S ribosomal subunit. Contacts protein L20.

This protein binds to 23S rRNA in the presence of protein L20. The chain is Large ribosomal subunit protein bL21 from Chromohalobacter salexigens (strain ATCC BAA-138 / DSM 3043 / CIP 106854 / NCIMB 13768 / 1H11).